Here is a 107-residue protein sequence, read N- to C-terminus: Prokineticin-2 (107 aa).

Positions 1–26 (MEDPRCAPLLLLLLLPLLLTPPAGDA) are cleaved as a signal peptide. Cystine bridges form between cysteine 33/cysteine 45, cysteine 39/cysteine 57, cysteine 44/cysteine 85, cysteine 67/cysteine 93, and cysteine 87/cysteine 103.

The protein belongs to the AVIT (prokineticin) family. In terms of tissue distribution, expressed at high levels in testis and at lower levels in brain, lung, ovary, spleen, thymus and uterus.

The protein localises to the secreted. Its function is as follows. May function as an output molecule from the suprachiasmatic nucleus (SCN) that transmits behavioral circadian rhythm. May also function locally within the SCN to synchronize output. Potently contracts gastrointestinal (GI) smooth muscle. The chain is Prokineticin-2 (Prok2) from Rattus norvegicus (Rat).